We begin with the raw amino-acid sequence, 1006 residues long: Transmembrane channel-like protein 5 (1006 aa).

Positions 1-289 are disordered; it reads MSAYYRNNWS…DDPVGSLWGE (289 aa). Topologically, residues 1–458 are extracellular; that stretch reads MSAYYRNNWS…YFNFLRWLLK (458 aa). Polar residues-rich tracts occupy residues 20 to 30, 50 to 59, and 76 to 101; these read SGSQNRTQGYL, TRSNPYSVAS, and RSLS…SPDH. Low complexity predominate over residues 138-149; the sequence is AGSSSSGNYAGS. The span at 239–250 shows a compositional bias: basic and acidic residues; it reads REPDYSDAENGH. A helical membrane pass occupies residues 459–479; that stretch reads FNIFSFILNFSFIIIPQFTVA. The Cytoplasmic segment spans residues 480–485; it reads KKNTLQ. The helical transmembrane segment at 486–508 threads the bilayer; that stretch reads FTGLEFFTGVGYFRDTVMYYGFY. Residues 509–525 lie on the Extracellular side of the membrane; the sequence is TNSTIQHGNSGASYNMQ. Residues 526–546 form a helical membrane-spanning segment; that stretch reads LAYIFTIGACLTTCFFSLLFS. At 547–619 the chain is on the cytoplasmic side; the sequence is MAKYFRNNFI…NQLLTRFSAY (73 aa). A helical transmembrane segment spans residues 620-640; it reads MVAWVVSTGVAIACCAAVYYL. Topologically, residues 641–654 are extracellular; it reads AEYNLEFLKTHSNP. Residues 655–675 form a helical membrane-spanning segment; that stretch reads GAVLLLPFVVSCINLAVPCIY. Topologically, residues 676 to 698 are cytoplasmic; the sequence is SMFRLVERYEMPRHEVYVLLIRN. The chain crosses the membrane as a helical span at residues 699–719; that stretch reads IFLKISIIGILCYYWLNTVAL. The Extracellular portion of the chain corresponds to 720–732; sequence SGEECWETLIGQD. The helical transmembrane segment at 733-753 threads the bilayer; it reads IYRLLLMDFVFSLVNSFLGEF. The Cytoplasmic segment spans residues 754–786; that stretch reads LRRIIGMQLITSLGLQEFDIARNVLELIYAQTL. The helical transmembrane segment at 787-807 threads the bilayer; the sequence is VWIGIFFCPLLPFIQMIMLFI. Residues 808 to 835 are Extracellular-facing; the sequence is MFYSKNISLMMNFQPPSKAWRASQMMTF. Residues 836–856 form a helical membrane-spanning segment; it reads FIFLLFFPSFTGVLCTLAITI. Residues 857–900 are Cytoplasmic-facing; sequence WRLKPSADCGPFRGLPLFIHSIYSWIDTLSTRPGYLWVVWIYRN. Residues 901–921 traverse the membrane as a helical segment; it reads LIGSVHFFFILTLIVLIITYL. Topologically, residues 922–1006 are extracellular; that stretch reads YWQITEGRKI…RSVQEGNPRA (85 aa).

The protein belongs to the TMC family.

The protein resides in the membrane. Probable component of an ion channel. Molecular function hasn't been characterized yet. This is Transmembrane channel-like protein 5 from Homo sapiens (Human).